A 68-amino-acid polypeptide reads, in one-letter code: Large ribosomal subunit protein uL29 (68 aa).

The protein belongs to the universal ribosomal protein uL29 family.

This chain is Large ribosomal subunit protein uL29, found in Erythrobacter litoralis (strain HTCC2594).